A 264-amino-acid chain; its full sequence is Small ribosomal subunit protein uS2 (264 aa).

Residues 228–264 (QLDAEDDYEDYDGSEYDDDYEETEYTDAVIPDEETEE) are disordered. Residues 230–264 (DAEDDYEDYDGSEYDDDYEETEYTDAVIPDEETEE) are compositionally biased toward acidic residues.

It belongs to the universal ribosomal protein uS2 family.

The protein is Small ribosomal subunit protein uS2 of Nostoc punctiforme (strain ATCC 29133 / PCC 73102).